The following is a 267-amino-acid chain: 4-hydroxy-tetrahydrodipicolinate reductase (267 aa).

NAD(+) contacts are provided by residues 12 to 17, 100 to 102, and 126 to 129; these read GPRGRM, GTT, and APNF. The active-site Proton donor/acceptor is H156. Position 157 (H157) interacts with (S)-2,3,4,5-tetrahydrodipicolinate. K160 functions as the Proton donor in the catalytic mechanism. Residue 166-167 participates in (S)-2,3,4,5-tetrahydrodipicolinate binding; it reads GT.

Belongs to the DapB family.

It localises to the cytoplasm. It catalyses the reaction (S)-2,3,4,5-tetrahydrodipicolinate + NAD(+) + H2O = (2S,4S)-4-hydroxy-2,3,4,5-tetrahydrodipicolinate + NADH + H(+). The enzyme catalyses (S)-2,3,4,5-tetrahydrodipicolinate + NADP(+) + H2O = (2S,4S)-4-hydroxy-2,3,4,5-tetrahydrodipicolinate + NADPH + H(+). It functions in the pathway amino-acid biosynthesis; L-lysine biosynthesis via DAP pathway; (S)-tetrahydrodipicolinate from L-aspartate: step 4/4. Catalyzes the conversion of 4-hydroxy-tetrahydrodipicolinate (HTPA) to tetrahydrodipicolinate. This Bacillus subtilis (strain 168) protein is 4-hydroxy-tetrahydrodipicolinate reductase.